The sequence spans 926 residues: Alpha-aminoadipic semialdehyde synthase, mitochondrial (926 aa).

Residues 1–27 (MLQVHRTGLGRLGVSLSKGLHHKAVLA) constitute a mitochondrion transit peptide. Positions 28-476 (VRREDVNAWE…ESRERAQSLS (449 aa)) are lysine-ketoglutarate reductase. 2 positions are modified to N6-acetyllysine: Lys-48 and Lys-56. Lys-93 bears the N6-acetyllysine; alternate mark. Lys-93 carries the post-translational modification N6-succinyllysine; alternate. At Lys-128 the chain carries N6-acetyllysine. Lys-138 carries the N6-acetyllysine; alternate modification. Lys-138 bears the N6-succinyllysine; alternate mark. Residue Lys-274 is modified to N6-succinyllysine. Position 286 is an N6-acetyllysine; alternate (Lys-286). Lys-286 carries the post-translational modification N6-succinyllysine; alternate. Lys-333 is subject to N6-succinyllysine. Residue Lys-458 is modified to N6-acetyllysine; alternate. Lys-458 bears the N6-succinyllysine; alternate mark. Residues 477-926 (MGTRRKVLVL…IYTTQSTIKP (450 aa)) form a saccharopine dehydrogenase region. NAD(+) is bound by residues Ser-488, Asp-512, and Gln-516. Lys-523 bears the N6-acetyllysine; alternate mark. Residue Lys-523 is modified to N6-succinyllysine; alternate. Residue Ile-533 coordinates NAD(+). Lys-535 bears the N6-acetyllysine; alternate mark. Residue Lys-535 is modified to N6-succinyllysine; alternate. NAD(+) is bound by residues Leu-554, Ala-576, and Ser-577. Position 577–578 (577–578 (SY)) interacts with L-saccharopine. Position 584 is an N6-acetyllysine; alternate (Lys-584). Residue Lys-584 is modified to N6-succinyllysine; alternate. NAD(+) contacts are provided by Leu-603, Asp-604, and Pro-605. Residue Asp-604 coordinates L-saccharopine. Arg-703 contacts L-saccharopine. Position 707 is an N6-acetyllysine (Lys-707). Position 724–726 (724–726 (TLR)) interacts with L-saccharopine. Lys-732 is subject to N6-succinyllysine. Lys-739 carries the N6-acetyllysine modification. Lys-761 bears the N6-acetyllysine; alternate mark. Lys-761 carries the N6-succinyllysine; alternate modification. Lys-780 carries the post-translational modification N6-acetyllysine.

It in the N-terminal section; belongs to the AlaDH/PNT family. In the C-terminal section; belongs to the saccharopine dehydrogenase family. In terms of assembly, homotetramer. In terms of tissue distribution, expressed in all 16 tissues examined with highest expression in the liver.

The protein localises to the mitochondrion. It catalyses the reaction L-saccharopine + NADP(+) + H2O = L-lysine + 2-oxoglutarate + NADPH + H(+). The enzyme catalyses L-saccharopine + NAD(+) + H2O = (S)-2-amino-6-oxohexanoate + L-glutamate + NADH + H(+). Its pathway is amino-acid degradation; L-lysine degradation via saccharopine pathway; glutaryl-CoA from L-lysine: step 1/6. It participates in amino-acid degradation; L-lysine degradation via saccharopine pathway; glutaryl-CoA from L-lysine: step 2/6. In terms of biological role, bifunctional enzyme that catalyzes the first two steps in lysine degradation. This is Alpha-aminoadipic semialdehyde synthase, mitochondrial from Homo sapiens (Human).